Here is a 454-residue protein sequence, read N- to C-terminus: Aquaporin-7 (454 aa).

The Cytoplasmic segment spans residues 1 to 71 (MNINEPRDGG…LHLHNKTRNH (71 aa)). Residues 72-92 (FVATVAEFAGTTLFLFFAFSG) form a helical membrane-spanning segment. The Extracellular segment spans residues 93-115 (TQVALLATPANDSNVVGTPSNPA). Residue Asn103 is glycosylated (N-linked (GlcNAc...) asparagine). Residues 116 to 136 (QLLYVSLCFGFSLAVNAWVFF) traverse the membrane as a helical segment. The Cytoplasmic segment spans residues 137–163 (RISGGLFNPAVTMGMCIVGALPYFRGL). The NPA 1 motif lies at 144 to 146 (NPA). A helical membrane pass occupies residues 164–184 (LLIFAQIIGGIAAAAIVSALF). The Extracellular segment spans residues 185–202 (PGPITFRTSLGGGTSIVQ). The helical transmembrane segment at 203 to 223 (GLFIEMFLTAELVFTIFMLAA) threads the bilayer. The Cytoplasmic portion of the chain corresponds to 224–229 (EKHKGT). Residues 230–250 (FIAPIGIGLSLFIAELTGVYF) traverse the membrane as a helical segment. The Extracellular portion of the chain corresponds to 251–274 (TGGSVNPARSFGPSVVSGQFTGYH). The NPA 2 signature appears at 256 to 258 (NPA). Residues 275–295 (WIYWVGPILGAILASAFYKFI) form a helical membrane-spanning segment. At 296–454 (KMLEYETANP…ENLRDNTHNN (159 aa)) the chain is on the cytoplasmic side. Residues 343–454 (GASHVHENGN…ENLRDNTHNN (112 aa)) form a disordered region.

It belongs to the MIP/aquaporin (TC 1.A.8) family.

Its subcellular location is the membrane. The enzyme catalyses H2O(in) = H2O(out). In terms of biological role, water channel required to facilitate the transport of water across membranes. Involved in conidiation. In Botryotinia fuckeliana (strain B05.10) (Noble rot fungus), this protein is Aquaporin-7.